Consider the following 303-residue polypeptide: Methionyl-tRNA formyltransferase (303 aa).

Residue 108–111 (SDLP) participates in (6S)-5,6,7,8-tetrahydrofolate binding.

Belongs to the Fmt family.

The enzyme catalyses L-methionyl-tRNA(fMet) + (6R)-10-formyltetrahydrofolate = N-formyl-L-methionyl-tRNA(fMet) + (6S)-5,6,7,8-tetrahydrofolate + H(+). Functionally, attaches a formyl group to the free amino group of methionyl-tRNA(fMet). The formyl group appears to play a dual role in the initiator identity of N-formylmethionyl-tRNA by promoting its recognition by IF2 and preventing the misappropriation of this tRNA by the elongation apparatus. This Rickettsia rickettsii (strain Iowa) protein is Methionyl-tRNA formyltransferase.